The sequence spans 815 residues: RNA-binding protein 5 (815 aa).

Positions 1–93 (MGSDKRVSRT…EHDYRHDISD (93 aa)) are disordered. 5 positions are modified to phosphoserine: Ser18, Ser59, Ser69, Ser72, and Ser78. Residues 98-178 (KTIMLRGLPI…KHIAMHYSNP (81 aa)) form the RRM 1 domain. The RanBP2-type zinc finger occupies 181–210 (KFEDWLCNKCCLNNFRKRLKCFRCGADKFD). The 85-residue stretch at 231–315 (DTIILRNIAP…KTIGVDFAKS (85 aa)) folds into the RRM 2 domain. A required for interaction with U2AF2 region spans residues 321–809 (VLSDGNRVSA…KDAVRKAMFA (489 aa)). A compositionally biased stretch (polar residues) spans 411–422 (QSPQLYNQTSNP). Disordered regions lie at residues 411 to 468 (QSPQ…DESS) and 507 to 540 (PAAE…AQQI). Residues 426–446 (PTEEAQPSTSTSTQAPAASPT) are compositionally biased toward low complexity. Ser444 carries the phosphoserine modification. The interval 452-535 (TKYAVPDTST…KEKKEKPKSK (84 aa)) is sufficient for interaction with ACIN1, PRPF8, SFRS3, SNRPB, SNRPN, SNRNP70 and SNRNP200. Ser621 and Ser624 each carry phosphoserine. A C2H2-type; atypical zinc finger spans residues 647 to 677 (MACLLCRRQFPNKDALVRHQQLSDLHKQNMD). Positions 743-789 (HSNIGNKMLQAMGWREGSGLGRKCQGITAPIEAQVRLKGAGLGAKGS) constitute a G-patch domain.

This sequence belongs to the RBM5/RBM10 family. In terms of assembly, component of the spliceosome A complex (also known as the prespliceosome). Appears to dissociate from the spliceosome upon formation of the spliceosome B complex (also known as the precatalytic spliceosome), in which the heterotrimeric U4/U6.U5 snRNPs are bound. Interacts with U2AF2; this interaction is direct. Also interacts with ACIN1, PRPF8, SFRS3, SNRPB, SNRPN, SNRNP70 and SNRNP200; these interactions may be indirect. In terms of tissue distribution, isoform 5 is widely expressed in normal tissues and is expressed at increased levels in T-leukemic cell lines.

It is found in the nucleus. In terms of biological role, component of the spliceosome A complex. Binds to ssRNA containing the consensus sequence 5'-AGGUAA-3'. Regulates alternative splicing of a number of mRNAs. May modulate splice site pairing after recruitment of the U1 and U2 snRNPs to the 5' and 3' splice sites of the intron. May both positively and negatively regulate apoptosis by regulating the alternative splicing of several genes involved in this process, including FAS and CASP2/caspase-2. In the case of FAS, promotes exclusion of exon 6 thereby producing a soluble form of FAS that inhibits apoptosis. In the case of CASP2/caspase-2, promotes exclusion of exon 9 thereby producing a catalytically active form of CASP2/Caspase-2 that induces apoptosis. The chain is RNA-binding protein 5 (RBM5) from Homo sapiens (Human).